The chain runs to 296 residues: Polyamine aminopropyltransferase (296 aa).

The region spanning 5-238 (ELWYETLHAN…GIMTFAWATQ (234 aa)) is the PABS domain. Gln33 contacts S-methyl-5'-thioadenosine. His64 and Asp88 together coordinate spermidine. S-methyl-5'-thioadenosine contacts are provided by residues Glu108 and 140–141 (DG). Residue Asp158 is the Proton acceptor of the active site. 158–161 (DCTD) contributes to the spermidine binding site. Pro165 provides a ligand contact to S-methyl-5'-thioadenosine.

The protein belongs to the spermidine/spermine synthase family. Homodimer or homotetramer.

Its subcellular location is the cytoplasm. It catalyses the reaction S-adenosyl 3-(methylsulfanyl)propylamine + putrescine = S-methyl-5'-thioadenosine + spermidine + H(+). Its pathway is amine and polyamine biosynthesis; spermidine biosynthesis; spermidine from putrescine: step 1/1. In terms of biological role, catalyzes the irreversible transfer of a propylamine group from the amino donor S-adenosylmethioninamine (decarboxy-AdoMet) to putrescine (1,4-diaminobutane) to yield spermidine. The sequence is that of Polyamine aminopropyltransferase from Yersinia pseudotuberculosis serotype O:1b (strain IP 31758).